We begin with the raw amino-acid sequence, 511 residues long: Probable pectinesterase/pectinesterase inhibitor 17 (511 aa).

Residues 1–23 form the signal peptide; that stretch reads MMAFRAYIINFVILCILVASTVS. The pectinesterase inhibitor 17 stretch occupies residues 24-171; the sequence is GYNQKDVKAW…SNLLCNTLAI (148 aa). N-linked (GlcNAc...) asparagine glycosylation is found at N112 and N160. Residues 237–414 form a pectinesterase 17 region; sequence VKQGVYSENL…LRPVLGSTKT (178 aa). Residues T277 and Q307 each coordinate substrate. D330 (proton donor; for pectinesterase activity) is an active-site residue. The cysteines at positions 344 and 364 are disulfide-linked. Residue D351 is the Nucleophile; for pectinesterase activity of the active site. Substrate contacts are provided by R418 and W420.

The protein in the N-terminal section; belongs to the PMEI family. In the C-terminal section; belongs to the pectinesterase family. In terms of tissue distribution, expressed in siliques.

It localises to the secreted. The protein resides in the cell wall. It catalyses the reaction [(1-&gt;4)-alpha-D-galacturonosyl methyl ester](n) + n H2O = [(1-&gt;4)-alpha-D-galacturonosyl](n) + n methanol + n H(+). The protein operates within glycan metabolism; pectin degradation; 2-dehydro-3-deoxy-D-gluconate from pectin: step 1/5. Acts in the modification of cell walls via demethylesterification of cell wall pectin. This is Probable pectinesterase/pectinesterase inhibitor 17 (PME17) from Arabidopsis thaliana (Mouse-ear cress).